The following is a 265-amino-acid chain: MAGATTAKGGARRTPPPGPPPPALKARRRLRLPRRRTLLVTGVATALLGSGVTWLLYGSSWLRVEQVAVSGTAALTPGEVREAAAIPLNEPLAAVDTDSVERRLRARLSRIADVDVSRSWPDTIAVRVTERRPEAIVEKAGKFLEVDEEGVLFATVPQAPKGVPLLQVEADRSPSSRHFGATRLRREAVAVIAQLPEKVRADTLSVRVRSYDSIALGLTRGRTVVWGSSERGAAKAKTLTALMKAVPDAERYDVSAPTAPAVTHS.

Over residues 1–13 (MAGATTAKGGARR) the composition is skewed to low complexity. Residues 1 to 25 (MAGATTAKGGARRTPPPGPPPPALK) are disordered. Residues 1 to 35 (MAGATTAKGGARRTPPPGPPPPALKARRRLRLPRR) are Cytoplasmic-facing. Residues 14–23 (TPPPGPPPPA) are compositionally biased toward pro residues. A helical membrane pass occupies residues 36 to 58 (RTLLVTGVATALLGSGVTWLLYG). The Extracellular portion of the chain corresponds to 59 to 265 (SSWLRVEQVA…APTAPAVTHS (207 aa)). A POTRA domain is found at 62 to 131 (LRVEQVAVSG…DTIAVRVTER (70 aa)).

Belongs to the FtsQ/DivIB family. FtsQ subfamily.

It is found in the cell membrane. Essential cell division protein. This is Cell division protein FtsQ from Streptomyces bingchenggensis (strain BCW-1).